The primary structure comprises 329 residues: Ubiquitin carboxyl-terminal hydrolase isozyme L5 (329 aa).

Residues 7–225 enclose the UCH catalytic domain; the sequence is EWCLMESDPG…IRFNLMAIVS (219 aa). Lysine 47 carries the post-translational modification N6-succinyllysine. Catalysis depends on cysteine 88, which acts as the Nucleophile. The residue at position 158 (lysine 158) is an N6-acetyllysine. Catalysis depends on histidine 164, which acts as the Proton donor. Position 289 is an N6-succinyllysine (lysine 289). The ULD domain occupies 291–319; that stretch reads NYLPFIMELLKTLAEHQQLIPLVEKAKEK. The segment at 313–329 is interaction with ADRM1; it reads VEKAKEKQNAKKAQETK.

The protein belongs to the peptidase C12 family. In terms of assembly, component of the 19S (PA700) regulatory complex of the 26S proteasome. Interacts with ADRM1 and NFRKB; in vitro ADRM1 and NFRKB compete for interaction with UCHL5. Component of the INO80 complex; specifically part of a complex module associated with N-terminus of INO80.

It is found in the cytoplasm. The protein resides in the nucleus. The catalysed reaction is Thiol-dependent hydrolysis of ester, thioester, amide, peptide and isopeptide bonds formed by the C-terminal Gly of ubiquitin (a 76-residue protein attached to proteins as an intracellular targeting signal).. Activated by ADRM1. Inhibited by interaction with NFRKB. In terms of biological role, protease that specifically cleaves 'Lys-48'-linked polyubiquitin chains. Deubiquitinating enzyme associated with the 19S regulatory subunit of the 26S proteasome. Putative regulatory component of the INO80 complex; however is inactive in the INO80 complex and is activated by a transient interaction of the INO80 complex with the proteasome via ADRM1. In Homo sapiens (Human), this protein is Ubiquitin carboxyl-terminal hydrolase isozyme L5 (UCHL5).